The sequence spans 199 residues: dITP/XTP pyrophosphatase (199 aa).

Residue 12 to 17 (SGNAGK) participates in substrate binding. The active-site Proton acceptor is aspartate 73. Residue aspartate 73 coordinates Mg(2+). Substrate contacts are provided by residues serine 74, 157–160 (FGYD), lysine 180, and 185–186 (HR).

The protein belongs to the HAM1 NTPase family. Homodimer. Requires Mg(2+) as cofactor.

The catalysed reaction is XTP + H2O = XMP + diphosphate + H(+). It carries out the reaction dITP + H2O = dIMP + diphosphate + H(+). It catalyses the reaction ITP + H2O = IMP + diphosphate + H(+). Pyrophosphatase that catalyzes the hydrolysis of nucleoside triphosphates to their monophosphate derivatives, with a high preference for the non-canonical purine nucleotides XTP (xanthosine triphosphate), dITP (deoxyinosine triphosphate) and ITP. Seems to function as a house-cleaning enzyme that removes non-canonical purine nucleotides from the nucleotide pool, thus preventing their incorporation into DNA/RNA and avoiding chromosomal lesions. The chain is dITP/XTP pyrophosphatase from Neisseria meningitidis serogroup B (strain ATCC BAA-335 / MC58).